The chain runs to 689 residues: Glycine--tRNA ligase beta subunit (689 aa).

Belongs to the class-II aminoacyl-tRNA synthetase family. As to quaternary structure, tetramer of two alpha and two beta subunits.

The protein resides in the cytoplasm. The enzyme catalyses tRNA(Gly) + glycine + ATP = glycyl-tRNA(Gly) + AMP + diphosphate. The chain is Glycine--tRNA ligase beta subunit from Aeromonas salmonicida (strain A449).